We begin with the raw amino-acid sequence, 534 residues long: MDFANIASQLNAGTILPEGIVILTLLGVLIVDLILGRTSARWIGYLAIAGLFTSIVALYFQWDNPNPISFTGGFNGDDLSIVFRGIIALSAAVTILMSIRYVDQSGTPLAEFIAILLSATLGGMFLSGASELVMIFISLETLSISSYLLTGYTKRDPRSNEAALKYLLIGASSTAVFLYGVSLLYGLSGGQTELSAIANGIATAKVGQSLGLVIALVFAIAGIGFKISAAPFHQWTPDVYEGAPTPVIAFLSVGSKAAGFALAIRLLTTAFPLVADEWRFVFTALAVLSMILGNVVALAQTSMKRMLAYSSIAQAGFVMIGLIAGTQAGYASMIFYLLVYLFMNLCGFTCIILFSLRTGTDQIAEYSGLYQKDPLLTLGLSIALLSLGGIPPLAGFFGKIYLFWAGWQAGLYWLVLLGLVTTVVSIYYYIRVVKMMVVKEPHEMSDAVKNYPQVRWDLPGLRPLQVGLVITLIATSLAGILSNPLFTLANNSISNTPFLQATINSHVEAQNLLLLPKLDSVSQSQPSVDSTAKI.

Helical transmembrane passes span 15–35 (ILPE…DLIL), 42–62 (WIGY…YFQW), 79–99 (LSIV…LMSI), 109–129 (LAEF…LSGA), 132–152 (LVMI…LTGY), 167–187 (LLIG…LYGL), 210–230 (LGLV…ISAA), 244–264 (PTPV…ALAI), 280–300 (FVFT…ALAQ), 306–326 (MLAY…IAGT), 334–354 (IFYL…IILF), 378–398 (LGLS…GFFG), 410–432 (GLYW…YIRV), and 466–486 (VGLV…NPLF).

Belongs to the complex I subunit 2 family. As to quaternary structure, NDH-1 can be composed of about 15 different subunits; different subcomplexes with different compositions have been identified which probably have different functions.

Its subcellular location is the cellular thylakoid membrane. The catalysed reaction is a plastoquinone + NADH + (n+1) H(+)(in) = a plastoquinol + NAD(+) + n H(+)(out). It carries out the reaction a plastoquinone + NADPH + (n+1) H(+)(in) = a plastoquinol + NADP(+) + n H(+)(out). Functionally, NDH-1 shuttles electrons from an unknown electron donor, via FMN and iron-sulfur (Fe-S) centers, to quinones in the respiratory and/or the photosynthetic chain. The immediate electron acceptor for the enzyme in this species is believed to be plastoquinone. Couples the redox reaction to proton translocation, and thus conserves the redox energy in a proton gradient. Cyanobacterial NDH-1 also plays a role in inorganic carbon-concentration. This Nostoc punctiforme (strain ATCC 29133 / PCC 73102) protein is NAD(P)H-quinone oxidoreductase subunit 2.